Reading from the N-terminus, the 492-residue chain is N-succinylglutamate 5-semialdehyde dehydrogenase (492 aa).

Residue 220 to 225 (GRANTG) coordinates NAD(+). Residues glutamate 243 and cysteine 277 contribute to the active site.

This sequence belongs to the aldehyde dehydrogenase family. AstD subfamily.

It carries out the reaction N-succinyl-L-glutamate 5-semialdehyde + NAD(+) + H2O = N-succinyl-L-glutamate + NADH + 2 H(+). Its pathway is amino-acid degradation; L-arginine degradation via AST pathway; L-glutamate and succinate from L-arginine: step 4/5. Functionally, catalyzes the NAD-dependent reduction of succinylglutamate semialdehyde into succinylglutamate. In Shigella boydii serotype 18 (strain CDC 3083-94 / BS512), this protein is N-succinylglutamate 5-semialdehyde dehydrogenase.